Reading from the N-terminus, the 61-residue chain is Small ribosomal subunit protein uS14 (61 aa).

Acidic residues predominate over residues 1 to 12; the sequence is MSESETTDEPDS. The tract at residues 1–25 is disordered; that stretch reads MSESETTDEPDSETASSERTGQLES. 4 residues coordinate Zn(2+): Cys26, Cys29, Cys44, and Cys47.

It belongs to the universal ribosomal protein uS14 family. Zinc-binding uS14 subfamily. In terms of assembly, part of the 30S ribosomal subunit. Zn(2+) is required as a cofactor.

Functionally, binds 16S rRNA, required for the assembly of 30S particles. In Haloarcula marismortui (strain ATCC 43049 / DSM 3752 / JCM 8966 / VKM B-1809) (Halobacterium marismortui), this protein is Small ribosomal subunit protein uS14.